A 664-amino-acid polypeptide reads, in one-letter code: Protein fem-1 homolog CG6966 (664 aa).

6 ANK repeats span residues 40-70 (NGAT…NVEQ), 82-111 (EDAP…NVNS), 115-144 (TNST…DFEV), 148-177 (HGHT…DVNR), 181-210 (KGNT…TMDV), and 213-242 (YGMT…VSRE). 2 TPR repeats span residues 245–279 (IHAL…RAVE) and 335–368 (SYYI…QQKI). The tract at residues 433–460 (QQKDQQHPQKQLPAADKSPSCSASSSAS) is disordered. The span at 450–460 (SPSCSASSSAS) shows a compositional bias: low complexity. 2 ANK repeats span residues 529–571 (FDRT…DPNA) and 575–605 (AGNT…HLDT).

The protein belongs to the fem-1 family. In terms of assembly, component of a CRL2 E3 ubiquitin-protein ligase complex, also named ECS (Elongin BC-CUL2/5-SOCS-box protein) complex.

The protein operates within protein modification; protein ubiquitination. In terms of biological role, substrate-recognition component of a Cul2-RING (CRL2) E3 ubiquitin-protein ligase complex of the DesCEND (destruction via C-end degrons) pathway, which recognizes a C-degron located at the extreme C terminus of target proteins, leading to their ubiquitination and degradation. The C-degron recognized by the DesCEND pathway is usually a motif of less than ten residues and can be present in full-length proteins, truncated proteins or proteolytically cleaved forms. The chain is Protein fem-1 homolog CG6966 from Drosophila melanogaster (Fruit fly).